A 715-amino-acid polypeptide reads, in one-letter code: Palmitoyltransferase ZDHHC5 (715 aa).

Residues 1 to 13 lie on the Cytoplasmic side of the membrane; that stretch reads MPAESGKRFKPSK. A helical membrane pass occupies residues 14-34; sequence YVPVSAAAIFLVGATTLFFAF. Residues 35–38 are Extracellular-facing; the sequence is TCPG. A helical transmembrane segment spans residues 39-59; it reads LSLYVSPAVPIYNAIMFLFVL. Residues 60 to 148 lie on the Cytoplasmic side of the membrane; sequence ANFSMATFMD…NCIGRRNYRY (89 aa). Tyrosine 91 carries the phosphotyrosine modification. The 51-residue stretch at 104–154 folds into the DHHC domain; it reads KWCATCRFYRPPRCSHCSVCDNCVEEFDHHCPWVNNCIGRRNYRYFFLFLL. The active-site S-palmitoyl cysteine intermediate is cysteine 134. A helical transmembrane segment spans residues 149-169; it reads FFLFLLSLTAHIMGVFGFGLL. The Extracellular portion of the chain corresponds to 170-191; the sequence is YVLYHIEELSGVRTAVTMAVMC. Residues 192-212 form a helical membrane-spanning segment; sequence VAGLFFIPVAGLTGFHVVLVA. The Cytoplasmic portion of the chain corresponds to 213–715; that stretch reads RGRTTNEQVT…VGGTTYEISV (503 aa). Serine 247 carries the post-translational modification Phosphoserine. The segment at 289 to 715 is disordered; it reads GELRRTKSKG…VGGTTYEISV (427 aa). Threonine 294 carries the phosphothreonine modification. Serine 296 and serine 299 each carry phosphoserine. The residue at position 303 (threonine 303) is a Phosphothreonine. At serine 345 the chain carries Phosphoserine. A phosphothreonine mark is found at threonine 348 and threonine 350. Low complexity predominate over residues 359 to 373; it reads SSSSTSAAMPHSSSA. Phosphoserine is present on residues serine 380, serine 398, serine 406, and serine 409. Threonine 411 bears the Phosphothreonine mark. A phosphoserine mark is found at serine 415, serine 425, serine 429, and serine 432. The span at 422–432 shows a compositional bias: low complexity; it reads SSGSRSSSLKS. Threonine 436 carries the phosphothreonine modification. Residues 442-478 are compositionally biased toward polar residues; that stretch reads QLQSIRSEGTTSTSYKSLANQTRNGSLSYDSLLTPSD. 2 positions are modified to phosphoserine: serine 529 and serine 554. An Omega-N-methylarginine modification is found at arginine 617. Serine 621 bears the Phosphoserine mark. Threonine 659 bears the Phosphothreonine mark. Positions 666-677 are enriched in polar residues; that stretch reads LKTTYSKSNGQP. A phosphoserine mark is found at serine 684 and serine 694. Residue arginine 697 is modified to Omega-N-methylarginine.

It belongs to the DHHC palmitoyltransferase family. ERF2/ZDHHC9 subfamily.

The protein resides in the cell membrane. The catalysed reaction is L-cysteinyl-[protein] + hexadecanoyl-CoA = S-hexadecanoyl-L-cysteinyl-[protein] + CoA. Its function is as follows. Palmitoyltransferase that catalyzes the addition of palmitate onto various protein substrates such as CTNND2, CD36, GSDMD, NLRP3, NOD1, NOD2, STAT3 and S1PR1 thus plays a role in various biological processes including cell adhesion, inflammation, fatty acid uptake, bacterial sensing or cardiac functions. Plays an important role in the regulation of synapse efficacy by mediating palmitoylation of delta-catenin/CTNND2, thereby increasing synaptic delivery and surface stabilization of alpha-amino-3-hydroxy-5-methyl-4-isoxazole propionic acid receptors (AMPARs). Under basal conditions, remains at the synaptic membrane through FYN-mediated phosphorylation that prevents association with endocytic proteins. Neuronal activity enhances the internalization and trafficking of DHHC5 from spines to dendritic shafts where it palmitoylates delta-catenin/CTNND2. Regulates cell adhesion at the plasma membrane by palmitoylating GOLGA7B and DSG2. Plays a role in innate immune response by mediating the palmitoylation of NOD1 and NOD2 and their proper recruitment to the bacterial entry site and phagosomes. Also participates in fatty acid uptake by palmitoylating CD36 and thereby targeting it to the plasma membrane. Upon binding of fatty acids to CD36, gets phosphorylated by LYN leading to inactivation and subsequent CD36 caveolar endocytosis. Controls oligodendrocyte development by catalyzing STAT3 palmitoylation. Acts as a regulator of inflammatory response by mediating palmitoylation of NLRP3 and GSDMD. Palmitoylates NLRP3 to promote inflammasome assembly and activation. Activates pyroptosis by catalyzing palmitoylation of gasdermin-D (GSDMD), thereby promoting membrane translocation and pore formation of GSDMD. In Pan troglodytes (Chimpanzee), this protein is Palmitoyltransferase ZDHHC5 (ZDHHC5).